A 202-amino-acid polypeptide reads, in one-letter code: Alpha-S1-casein (202 aa).

Disordered stretches follow at residues 1–25 and 51–84; these read RPKL…VLKE and LKEK…VVPI. Composition is skewed to basic and acidic residues over residues 16–25 and 51–63; these read QDSREKVLKE and LKEK…KEYL. Serine 18 carries the phosphoserine modification. The segment covering 70–80 has biased composition (low complexity); the sequence is QESSSTSSSEE. Residues serine 72, serine 73, serine 74, serine 76, serine 77, and serine 78 each carry the phosphoserine modification.

It belongs to the alpha-casein family. In terms of tissue distribution, mammary gland specific. Secreted in milk.

Its subcellular location is the secreted. Its function is as follows. Important role in the capacity of milk to transport calcium phosphate. This is Alpha-S1-casein from Equus asinus (Donkey).